Here is a 539-residue protein sequence, read N- to C-terminus: Phosphoenolpyruvate carboxykinase (ATP) (539 aa).

Substrate contacts are provided by arginine 64, tyrosine 206, and lysine 212. Residues lysine 212, histidine 231, and 247–255 (GLSGTGKTT) each bind ATP. 2 residues coordinate Mn(2+): lysine 212 and histidine 231. Residue aspartate 268 participates in Mn(2+) binding. Residues glutamate 296, arginine 332, 448-449 (RI), and threonine 454 each bind ATP. Position 332 (arginine 332) interacts with substrate.

Belongs to the phosphoenolpyruvate carboxykinase (ATP) family. As to quaternary structure, monomer. The cofactor is Mn(2+).

It is found in the cytoplasm. The enzyme catalyses oxaloacetate + ATP = phosphoenolpyruvate + ADP + CO2. Its pathway is carbohydrate biosynthesis; gluconeogenesis. In terms of biological role, involved in the gluconeogenesis. Catalyzes the conversion of oxaloacetate (OAA) to phosphoenolpyruvate (PEP) through direct phosphoryl transfer between the nucleoside triphosphate and OAA. The chain is Phosphoenolpyruvate carboxykinase (ATP) from Sodalis glossinidius (strain morsitans).